The chain runs to 618 residues: Zinc finger protein 48 (618 aa).

M1 is modified (N-acetylmethionine). 2 stretches are compositionally biased toward basic and acidic residues: residues 1–22 and 39–51; these read MERA…EPQR and EFEH…DLGF. Disordered regions lie at residues 1–51 and 78–109; these read MERA…DLGF and LWVQ…ASSD. K87 is covalently cross-linked (Glycyl lysine isopeptide (Lys-Gly) (interchain with G-Cter in SUMO2)). 2 consecutive C2H2-type zinc fingers follow at residues 112–134 and 140–162; these read AVCG…QRTH and YKCG…QRTH. The tract at residues 157–189 is disordered; sequence KHQRTHSGEKPYRARPPAQGPPKIPRSRIPAGE. K179 participates in a covalent cross-link: Glycyl lysine isopeptide (Lys-Gly) (interchain with G-Cter in SUMO2). C2H2-type zinc fingers lie at residues 192–214 and 220–242; these read TICG…QRTH and YKCG…QRTH. The disordered stretch occupies residues 235–271; that stretch reads RIKHQRTHRGEQPPRPVVPRRQPSRAATAATQGPKAQ. A Glycyl lysine isopeptide (Lys-Gly) (interchain with G-Cter in SUMO2) cross-link involves residue K269. C2H2-type zinc fingers lie at residues 275-297 and 303-325; these read YICT…QRSH and FGCD…LRVH. A Glycyl lysine isopeptide (Lys-Gly) (interchain with G-Cter in SUMO2) cross-link involves residue K329. 2 consecutive C2H2-type zinc fingers follow at residues 331 to 353 and 359 to 381; these read YLCP…LRTH and HACP…RLTH. The span at 392–414 shows a compositional bias: pro residues; it reads YPLPALIPSPPPPPLGTSPPLTP. Residues 392-457 form a disordered region; that stretch reads YPLPALIPSP…DKPHKCPECG (66 aa). A compositionally biased stretch (low complexity) spans 415-432; sequence RSPSHSGEPFGLPGLEPE. The C2H2-type 9 zinc finger occupies 451-473; sequence HKCPECGKGFRRSSDLVKHHRVH. K477 is covalently cross-linked (Glycyl lysine isopeptide (Lys-Gly) (interchain with G-Cter in SUMO2)). Residues 479 to 501 form a C2H2-type 10 zinc finger; it reads YLCPECGKGFADSSARVKHLRTH. Residues 500 to 540 are disordered; the sequence is THRGERARPPPPSTLLRPHNPPGPVPMAPRPRVRAQPSGPS. Pro residues predominate over residues 508–528; sequence PPPPSTLLRPHNPPGPVPMAP. 2 C2H2-type zinc fingers span residues 543-565 and 571-593; these read HVCG…RRTH and YKCA…QRGH. A Glycyl lysine isopeptide (Lys-Gly) (interchain with G-Cter in SUMO2) cross-link involves residue K610.

Belongs to the krueppel C2H2-type zinc-finger protein family.

It is found in the nucleus. Functionally, may be involved in transcriptional regulation. This is Zinc finger protein 48 (ZNF48) from Homo sapiens (Human).